The following is a 133-amino-acid chain: Transmembrane protein 60 (133 aa).

The next 4 membrane-spanning stretches (helical) occupy residues 5–25 (LAQR…MLVL), 35–55 (WFLI…MLIV), 78–98 (AWYL…CAKL), and 110–130 (FIPL…NVFF).

It localises to the membrane. This is Transmembrane protein 60 (Tmem60) from Mus musculus (Mouse).